We begin with the raw amino-acid sequence, 316 residues long: MTTKLEQLRKLTTVVADTGDIEAIAKYTPEDATTNPSLILKAAEITEYAPLIDASIEYAKAQSNDKAQQVQDTCDMLAVNIGKEILKVVPGRISTEVDARLSYDTEGSVAKARQLIKMYNDAGITNDRILIKLASTWEGIRAAEILEKEGINCNLTLLFSFAQARACAEAGVYLISPFVGRIMDWYKAKEGRDFEPSEDPGVVSVTGIYNYYKEHGYNTVVMGASFRNIGEILELAGCDRLTISPNLLQELEEATGEVVEKLVDTNGNKARPAAMTHAEFLWDHNQDAMAVEKLAEGIRNFAVDQGKLEAMIAAKL.

Lysine 132 serves as the catalytic Schiff-base intermediate with substrate.

The protein belongs to the transaldolase family. Type 1 subfamily. In terms of assembly, homodimer.

It is found in the cytoplasm. It carries out the reaction D-sedoheptulose 7-phosphate + D-glyceraldehyde 3-phosphate = D-erythrose 4-phosphate + beta-D-fructose 6-phosphate. Its pathway is carbohydrate degradation; pentose phosphate pathway; D-glyceraldehyde 3-phosphate and beta-D-fructose 6-phosphate from D-ribose 5-phosphate and D-xylulose 5-phosphate (non-oxidative stage): step 2/3. Transaldolase is important for the balance of metabolites in the pentose-phosphate pathway. The sequence is that of Transaldolase from Aliivibrio fischeri (strain MJ11) (Vibrio fischeri).